The primary structure comprises 1177 residues: Lysylphosphatidylglycerol biosynthesis bifunctional protein LysX (1177 aa).

Disordered regions lie at residues 1–40 and 61–85; these read MRRA…AKFV and VTLA…PRNR. The interval 1–676 is phosphatidylglycerol lysyltransferase; that stretch reads MRRAGRSRQF…LLHHDGSAPD (676 aa). Low complexity predominate over residues 65-85; that stretch reads SPGSRSGSGPRSGPRLGPRNR. Transmembrane regions (helical) follow at residues 93-113, 135-155, 159-179, 189-209, 227-247, and 281-301; these read VPAA…LGSV, FPDT…ALTA, IAWL…VADI, IFGE…LVLA, AVLV…VELF, and VFLN…ATIV. The interval 673-693 is disordered; it reads SAPDVSGLRPERTDAEEARSR. Positions 677 to 1177 are lysine--tRNA ligase; it reads VSGLRPERTD…TLPFPLAKPH (501 aa). The span at 681–693 shows a compositional bias: basic and acidic residues; sequence RPERTDAEEARSR. A DNA-binding region (OB) is located at residues 738-816; the sequence is ITVAGRILRI…SLIVTDWRMI (79 aa). Residues D1089 and E1096 each coordinate Mg(2+).

It in the N-terminal section; belongs to the LPG synthetase family. This sequence in the C-terminal section; belongs to the class-II aminoacyl-tRNA synthetase family. Requires Mg(2+) as cofactor.

The protein localises to the cell membrane. The catalysed reaction is tRNA(Lys) + L-lysine + ATP = L-lysyl-tRNA(Lys) + AMP + diphosphate. It carries out the reaction L-lysyl-tRNA(Lys) + a 1,2-diacyl-sn-glycero-3-phospho-(1'-sn-glycerol) = a 1,2-diacyl-sn-glycero-3-phospho-1'-(3'-O-L-lysyl)-sn-glycerol + tRNA(Lys). Catalyzes the production of L-lysyl-tRNA(Lys)transfer and the transfer of a lysyl group from L-lysyl-tRNA(Lys) to membrane-bound phosphatidylglycerol (PG), which produces lysylphosphatidylglycerol (LPG), one of the components of the bacterial membrane with a positive net charge. LPG synthesis contributes to the resistance to cationic antimicrobial peptides (CAMPs) and likely protects M.tuberculosis against the CAMPs produced by competiting microorganisms (bacteriocins). In fact, the modification of anionic phosphatidylglycerol with positively charged L-lysine results in repulsion of the peptides. The polypeptide is Lysylphosphatidylglycerol biosynthesis bifunctional protein LysX (lysX) (Mycolicibacterium paratuberculosis (strain ATCC BAA-968 / K-10) (Mycobacterium paratuberculosis)).